The primary structure comprises 287 residues: MQVQKSFKDKKTSGTLYLVPTPIGNLQDMTFRAVATLKEVDFICAEDTRNTGLLLKHFDIATKQISFHEHNSYEKIPDLIDLLISGRSLAQVSDAGMPSISDPGHDLVKAAIDSDIAVVALPGASAGITALIASGLAPQPHVFYGFLPRKAGQQKAFFEDKHHYTETQMFCESPYRIKDTLTNMLACYGDRQVVLVRELTKLFEEYQRGSISEILSYLEETPLKGECLLIVAGAQVDSEIELTADVDLVSLVQKEIQAGAKPNQAIKTIAKAYQVNRQELYQQFHDL.

It belongs to the methyltransferase superfamily. RsmI family.

It localises to the cytoplasm. It carries out the reaction cytidine(1402) in 16S rRNA + S-adenosyl-L-methionine = 2'-O-methylcytidine(1402) in 16S rRNA + S-adenosyl-L-homocysteine + H(+). Its function is as follows. Catalyzes the 2'-O-methylation of the ribose of cytidine 1402 (C1402) in 16S rRNA. This is Ribosomal RNA small subunit methyltransferase I from Streptococcus pyogenes serotype M6 (strain ATCC BAA-946 / MGAS10394).